The primary structure comprises 82 residues: Small ribosomal subunit protein bS16 (82 aa).

This sequence belongs to the bacterial ribosomal protein bS16 family.

The polypeptide is Small ribosomal subunit protein bS16 (Pseudoalteromonas translucida (strain TAC 125)).